The chain runs to 322 residues: Cysteine synthase (322 aa).

Residues asparagine 8 and arginine 35 each coordinate hydrogen sulfide. Lysine 42 carries the N6-(pyridoxal phosphate)lysine modification. Residues asparagine 72 and 177–181 (GTGGT) each bind pyridoxal 5'-phosphate. Position 269 (leucine 269) interacts with hydrogen sulfide. Serine 273 lines the pyridoxal 5'-phosphate pocket.

It belongs to the cysteine synthase/cystathionine beta-synthase family. Homodimer. Pyridoxal 5'-phosphate is required as a cofactor.

It catalyses the reaction O-acetyl-L-serine + hydrogen sulfide = L-cysteine + acetate. Its pathway is amino-acid biosynthesis; L-cysteine biosynthesis; L-cysteine from L-serine: step 2/2. This Buchnera aphidicola subsp. Schizaphis graminum (strain Sg) protein is Cysteine synthase (cysK).